We begin with the raw amino-acid sequence, 295 residues long: Pyridoxal 5'-phosphate synthase subunit PdxS (295 aa).

Asp25 provides a ligand contact to D-ribose 5-phosphate. Lys82 (schiff-base intermediate with D-ribose 5-phosphate) is an active-site residue. Position 154 (Gly154) interacts with D-ribose 5-phosphate. Residue Arg166 coordinates D-glyceraldehyde 3-phosphate. D-ribose 5-phosphate is bound by residues Gly215 and 236–237; that span reads GS.

This sequence belongs to the PdxS/SNZ family. In terms of assembly, in the presence of PdxT, forms a dodecamer of heterodimers.

The enzyme catalyses aldehydo-D-ribose 5-phosphate + D-glyceraldehyde 3-phosphate + L-glutamine = pyridoxal 5'-phosphate + L-glutamate + phosphate + 3 H2O + H(+). The protein operates within cofactor biosynthesis; pyridoxal 5'-phosphate biosynthesis. Functionally, catalyzes the formation of pyridoxal 5'-phosphate from ribose 5-phosphate (RBP), glyceraldehyde 3-phosphate (G3P) and ammonia. The ammonia is provided by the PdxT subunit. Can also use ribulose 5-phosphate and dihydroxyacetone phosphate as substrates, resulting from enzyme-catalyzed isomerization of RBP and G3P, respectively. The sequence is that of Pyridoxal 5'-phosphate synthase subunit PdxS from Bacillus cytotoxicus (strain DSM 22905 / CIP 110041 / 391-98 / NVH 391-98).